We begin with the raw amino-acid sequence, 147 residues long: Small ribosomal subunit protein uS9 (147 aa).

Positions 128-147 are disordered; the sequence is KERKKYGQMGARAKYRWSKR.

The protein belongs to the universal ribosomal protein uS9 family.

In Aquifex aeolicus (strain VF5), this protein is Small ribosomal subunit protein uS9 (rpsI).